A 304-amino-acid chain; its full sequence is Signal recognition particle receptor FtsY (304 aa).

GTP is bound by residues 109–116, 191–195, and 255–258; these read GVNGVGKT, DTAGR, and TKLD.

This sequence belongs to the GTP-binding SRP family. FtsY subfamily. Part of the signal recognition particle protein translocation system, which is composed of SRP and FtsY. Sensitive to endogenous proteolytic cleavage between residues 18 and 19 and between residues 86 and 87.

The protein resides in the cell membrane. It localises to the cytoplasm. The enzyme catalyses GTP + H2O = GDP + phosphate + H(+). In terms of biological role, involved in targeting and insertion of nascent membrane proteins into the cytoplasmic membrane. Acts as a receptor for the complex formed by the signal recognition particle (SRP) and the ribosome-nascent chain (RNC). In Thermus aquaticus, this protein is Signal recognition particle receptor FtsY.